We begin with the raw amino-acid sequence, 964 residues long: Chromatin assembly factor 1 subunit A (964 aa).

Positions 1–49 (MLEEPECGAPGARGEAAAMDCKDRPAFPVKKLIQARLPFKRLNLVPKEK) are binds to PCNA. Residues 1–316 (MLEEPECGAP…LHTGPSPFPA (316 aa)) form a binds to CBX1 chromo shadow domain region. A phosphoserine mark is found at Ser126, Ser141, and Ser144. The tract at residues 146–232 (AQKNINGVPD…KDRDGWSEAG (87 aa)) is disordered. The span at 156–172 (KAGDDRGLPKARQKDEL) shows a compositional bias: basic and acidic residues. Residue Lys185 forms a Glycyl lysine isopeptide (Lys-Gly) (interchain with G-Cter in SUMO1); alternate linkage. A Glycyl lysine isopeptide (Lys-Gly) (interchain with G-Cter in SUMO2); alternate cross-link involves residue Lys185. The PxVxL motif signature appears at 236–249 (FKGKMPVVVLQDIL). Disordered regions lie at residues 253 to 437 (PPAR…REEE) and 601 to 641 (DSDE…VPHG). Residues 284–298 (LSHSSLSSSSPTSSP) show a composition bias toward low complexity. Ser312 is subject to Phosphoserine. The stretch at 329–453 (RGSAEKNKMK…KAEITRFFQK (125 aa)) forms a coiled coil. Residues 331 to 437 (SAEKNKMKLQ…EEEKRLREEE (107 aa)) are compositionally biased toward basic and acidic residues. Acidic residues-rich tracts occupy residues 601–612 (DSDEEWEEEEPG) and 620–635 (GDDD…EDDG). The segment at 644-680 (SEDEGVTEECADPENHKVRQKLKAKEWDEFLAKGKRF) is necessary for homodimerization and competence for chromatin assembly. Residues 662 to 964 (RQKLKAKEWD…FVSPSSLRLS (303 aa)) are binds to p60. Position 723 is a phosphothreonine (Thr723). A disordered region spans residues 769-799 (RDAGSPEDSAASPPSPGPARPQTPTASEDVA). Positions 770 to 780 (DAGSPEDSAAS) are enriched in low complexity. Residues Ser773, Ser783, Ser811, Ser876, and Ser881 each carry the phosphoserine modification. Residues 859 to 878 (EDSGSVPAPGPGQGMPVSLK) form a disordered region. Disordered stretches follow at residues 897 to 920 (DGQV…DDEG) and 933 to 964 (IQAP…LRLS). A compositionally biased stretch (acidic residues) spans 904–920 (DLDDFQADTEEEDDDEG). Polar residues predominate over residues 949–964 (MDTSESFVSPSSLRLS). Ser959 bears the Phosphoserine mark.

Belongs to the CHAF1A family. As to quaternary structure, homodimer. Part of the CAF-1 complex that contains RBBP4, CHAF1B and CHAF1A. CHAF1A binds directly to CHAF1B. Only minor amounts of RBBP4 are complexed with CHAF1A and CHAF1B in G1 phase. Interacts with PCNA; the interaction is direct. Interacts (via the PxVxL motif) with CBX5; the interaction is direct. Interacts with MBD1. Interacts with histones H3.1, H3.2 and H3.1t.

It localises to the nucleus. Its function is as follows. Acts as a component of the histone chaperone complex chromatin assembly factor 1 (CAF-1), which assembles histone octamers onto DNA during replication and repair. CAF-1 performs the first step of the nucleosome assembly process, bringing newly synthesized histones H3 and H4 to replicating DNA; histones H2A/H2B can bind to this chromatin precursor subsequent to DNA replication to complete the histone octamer. It may play a role in heterochromatin maintenance in proliferating cells by bringing newly synthesized cbx proteins to heterochromatic DNA replication foci. This is Chromatin assembly factor 1 subunit A (CHAF1A) from Bos taurus (Bovine).